Here is a 316-residue protein sequence, read N- to C-terminus: MAVQGSQRRLLGSLNSTPTAIPQLGLAANQTGARCLEVSIPDGLFLSLGLVSLVENVLVVATIAKNRNLHSPMYCFICCLALSDLLVSGSNVVDTLLLLLEAGALAARAAVLQQLDNVIDVITCSSMLSSLCFLGAIAVDRYISIFYALRYRSIVTLPRARRAVAAIWVASVLFSTLFIAYYDHTAVLLCLVVFFLAMLVLMAVLYVHMLARACQHAQGIARLHKRQRPVHKGFGLKGPVTLTILLGIFFLCWGPFFLHLTLIVLCPEHPTCGCIFKNFNLFLALIICNAIIDPLIYAFHSQELRRTLKEVLTCSW.

Residues Met-1–Glu-37 lie on the Extracellular side of the membrane. N-linked (GlcNAc...) asparagine glycosylation occurs at Asn-29. The helical transmembrane segment at Val-38–Ile-63 threads the bilayer. The Cytoplasmic portion of the chain corresponds to Ala-64 to Pro-72. The chain crosses the membrane as a helical span at residues Met-73–Val-93. At Asp-94–Asn-117 the chain is on the extracellular side. The helical transmembrane segment at Val-118–Val-139 threads the bilayer. Residues Asp-140–Arg-162 are Cytoplasmic-facing. Residues Ala-163–Tyr-182 traverse the membrane as a helical segment. The Extracellular segment spans residues Asp-183 to Cys-190. The chain crosses the membrane as a helical span at residues Leu-191–Leu-210. Residues Ala-211–Pro-239 lie on the Cytoplasmic side of the membrane. The helical transmembrane segment at Val-240–Leu-265 threads the bilayer. At Cys-266 to Asn-278 the chain is on the extracellular side. A helical membrane pass occupies residues Phe-279 to Phe-299. At His-300–Trp-316 the chain is on the cytoplasmic side. Residue Cys-314 is the site of S-palmitoyl cysteine attachment.

Belongs to the G-protein coupled receptor 1 family. In terms of assembly, interacts with MGRN1, but does not undergo MGRN1-mediated ubiquitination; this interaction competes with GNAS-binding and thus inhibits agonist-induced cAMP production. Interacts with OPN3; the interaction results in a decrease in MC1R-mediated cAMP signaling and ultimately a decrease in melanin production in melanocytes.

Its subcellular location is the cell membrane. Receptor for MSH (alpha, beta and gamma) and ACTH. The activity of this receptor is mediated by G proteins which activate adenylate cyclase. Mediates melanogenesis, the production of eumelanin (black/brown) and phaeomelanin (red/yellow), via regulation of cAMP signaling in melanocytes. This chain is Melanocyte-stimulating hormone receptor (MC1R), found in Gorilla gorilla gorilla (Western lowland gorilla).